Here is a 657-residue protein sequence, read N- to C-terminus: MKRIRLVDLPLIIKIGFAPAFALLMLAVMAGGAILVQKSQSAALKQVVERDMRQNLEIQRISKRISNINGELFVVMTHKAGNIDVDKNDARMAAVLVETDAVKKDLLALKSKLPAEEQPKIAELIKSLEECRSAIDTVSGMISVDFNMAAGFIAPFEEQYVKMTGQLDQVVAAANQRIESESAKRQAQATAAMSVTIIMSLLTLGAVGALAFLTVMTTRKSINDIAAATDKLSKGDNSIDLEKMTRGDELGGIVTALKVFRDNQVHLEQLRADQEKSAALTADERRSKEAAAAAAAQEASLVVSNLAEGLEKLASGDLTFRVTADFPGDYRKLKDDFNAAMGSLQETMKVIAASTDGLSTGADEIAHASDDLSRRTEQQAASLEETAAALDELTATVRRTAAGARQASDVVSTTRGEATHSGQVVHQAVSAMGEIEKSSGQISQIIGVIDEIAFQTNLLALNAGVEAARAGEAGRGFAVVAQEVRALAQRSAEAAKEIKALISSSTQQVSQGVSLVGQTGEALQRIVTKVGEIDALVTEIAASAAEQATGLNEVNTAVNQMDQVTQQNAAMVEQSTAATHSLKGETAELVRLMARFQVGSGSSSYARPAVADAGHHAPARNPVAEQQARLNTFARPGRSSGSAALAQAPASDGWEEF.

Residues 1-5 are Cytoplasmic-facing; sequence MKRIR. Residues 6 to 29 traverse the membrane as a helical segment; that stretch reads LVDLPLIIKIGFAPAFALLMLAVM. Residues 30–188 lie on the Periplasmic side of the membrane; sequence AGGAILVQKS…ESESAKRQAQ (159 aa). The helical transmembrane segment at 189–212 threads the bilayer; sequence ATAAMSVTIIMSLLTLGAVGALAF. Residues 213-657 lie on the Cytoplasmic side of the membrane; that stretch reads LTVMTTRKSI…APASDGWEEF (445 aa). HAMP domains follow at residues 216-269 and 297-349; these read MTTR…HLEQ and QEAS…ETMK. The region spanning 354–583 is the Methyl-accepting transducer domain; that stretch reads STDGLSTGAD…QSTAATHSLK (230 aa). Residue Gln-378 is modified to Glutamate methyl ester (Gln). Glutamate methyl ester (Glu) is present on residues Glu-385 and Glu-392. Gln-574 is modified (glutamate methyl ester (Gln)). Residues 634-657 are disordered; the sequence is ARPGRSSGSAALAQAPASDGWEEF.

Belongs to the methyl-accepting chemotaxis (MCP) protein family.

The protein resides in the cell membrane. In terms of biological role, chemotactic-signal transducers respond to changes in the concentration of attractants and repellents in the environment, transduce a signal from the outside to the inside of the cell, and facilitate sensory adaptation through the variation of the level of methylation. Attractants increase the level of methylation while repellents decrease the level of methylation. This is Chemoreceptor McpA (mcpA) from Caulobacter vibrioides (strain ATCC 19089 / CIP 103742 / CB 15) (Caulobacter crescentus).